Consider the following 936-residue polypeptide: ABC transporter A family member 5 (936 aa).

7 helical membrane passes run 34–54 (LIVI…LFDT), 340–360 (ASLI…PVML), 393–413 (FLAI…AIGL), 422–442 (SIQF…AFLV), 454–474 (VAAY…FQFL), 484–501 (WIYI…RGLY), and 527–547 (AMEE…IAAY). One can recognise an ABC transporter domain in the interval 614–851 (IVCDNLKKVY…YGGSYVLTMT (238 aa)). 652–659 (GPNGAGKT) serves as a coordination point for ATP.

This sequence belongs to the ABC transporter superfamily. ABCA family. CPR flippase (TC 3.A.1.211) subfamily.

The protein localises to the membrane. This Arabidopsis thaliana (Mouse-ear cress) protein is ABC transporter A family member 5 (ABCA5).